The sequence spans 476 residues: Flavin-dependent halogenase otaD (476 aa).

FAD-binding residues include Gly-14 and Gly-17. 2 residues coordinate chloride: Ser-304 and Gly-305. Residue Val-306 participates in FAD binding.

This sequence belongs to the flavin-dependent halogenase family.

The catalysed reaction is ochratoxin B + FADH2 + chloride + O2 = ochratoxin A + FAD + 2 H2O. It functions in the pathway mycotoxin biosynthesis. Flavin-dependent halogenase; part of the gene cluster that mediates the biosynthesis of ochratoxin A (OTA), a mycotoxin composed of a chlorinated type I polyketide dihydroisocoumarin moiety linked to L-phenylalanine, and demonstrated to have nephrotoxic, immunotoxic, genotoxic, neurotoxic, and teratogenic properties. OtaD chlorinates ochratoxin B (OTB) at the C-5 position to form OTA. The pathway begins with the highly reducing polyketide synthase otaA that catalyzes the formation of the isocoumarin group during the initial stages of biosynthesis, starting from one acetate and 4 malonate units, to originate the characteristic pentaketide skeleton 7-methylmellein (7-MM) of the OTA molecule. The newly identified cyclase otaY might be involved in the polyketide cyclization reaction during the initial steps of the OTA biosynthesis. 7-MM is then oxidized into 7-carboxymellein (also called ochratoxin beta) by the cytochrome P450 monooxygenase otaC. The NRPS encoded by the otaB gene is involved in the linking of phenylalanine to the dihydroisocoumarin ring. The reaction catalyzed by NRPS results in the production of ochratoxin B (OTB), which is the non-chlorinated analog of OTA and which subsequently serves as the substrate of the halogenase otaD for chlorination activity to form the final molecular structure of OTA, containing a chlorine atom in the C-5 position of the molecule. This is Flavin-dependent halogenase otaD from Aspergillus niger (strain ATCC MYA-4892 / CBS 513.88 / FGSC A1513).